A 347-amino-acid chain; its full sequence is G-protein coupled receptor homolog U12 (347 aa).

The next 6 membrane-spanning stretches (helical) occupy residues 36–56 (GITL…MILY), 67–87 (FYVI…FFMT), 103–124 (LVYF…IIAT), 147–167 (IGIL…FVKT), 194–214 (IVFS…FYVI), and 236–256 (ILLL…ICEI). Cys101 and Cys176 form a disulfide bridge. A disordered region spans residues 321–347 (QKRKDSDASEHDQNSKSKASVEKNQPL). Over residues 322 to 341 (KRKDSDASEHDQNSKSKASV) the composition is skewed to basic and acidic residues.

Belongs to the G-protein coupled receptor 1 family.

It is found in the membrane. Functionally, probable G-protein coupled receptor. The sequence is that of G-protein coupled receptor homolog U12 (U12) from Homo sapiens (Human).